We begin with the raw amino-acid sequence, 332 residues long: Geranylgeranyl pyrophosphate synthase dpasD (332 aa).

The isopentenyl diphosphate site is built by lysine 55, arginine 58, and histidine 87. Mg(2+) is bound by residues aspartate 94 and aspartate 98. Arginine 103 lines the dimethylallyl diphosphate pocket. Arginine 104 contributes to the isopentenyl diphosphate binding site. Dimethylallyl diphosphate-binding residues include lysine 181, threonine 182, and glutamine 215. Aspartate 218 provides a ligand contact to Mg(2+). Dimethylallyl diphosphate-binding residues include asparagine 222, lysine 232, and lysine 242.

This sequence belongs to the FPP/GGPP synthase family. Mg(2+) is required as a cofactor.

It catalyses the reaction isopentenyl diphosphate + dimethylallyl diphosphate = (2E)-geranyl diphosphate + diphosphate. It carries out the reaction isopentenyl diphosphate + (2E)-geranyl diphosphate = (2E,6E)-farnesyl diphosphate + diphosphate. The catalysed reaction is isopentenyl diphosphate + (2E,6E)-farnesyl diphosphate = (2E,6E,10E)-geranylgeranyl diphosphate + diphosphate. It functions in the pathway secondary metabolite biosynthesis; terpenoid biosynthesis. Geranylgeranyl pyrophosphate synthase; part of the gene cluster that mediates the biosynthesis of the diterpenoid pyrones subglutinols A and B. The first step of the pathway is the synthesis of the alpha-pyrone moiety by the polyketide synthase dpasA via condensation of one acetyl-CoA starter unit with 3 malonyl-CoA units and 2 methylations. The alpha-pyrone is then combined with geranylgeranyl pyrophosphate (GGPP) formed by the GGPP synthase dpasD through the action of the prenyltransferase dpasC to yield a linear alpha-pyrone diterpenoid. Subsequent steps in the diterpenoid pyrone biosynthetic pathway involve the decalin core formation, which is initiated by the epoxidation of the C10-C11 olefin by the FAD-dependent oxidoreductase dpasE, and is followed by a cyclization cascade catalyzed by the terpene cyclase dpasB. The FAD-linked oxidoreductase dpasF is then involved in tetrahydrofuran (THF) ring formation at the C5 unit to complete the formation of subglutinols A and B. DpasF also possesses an additional catalytic ability of multi-step oxidations to generate a new DDP analog with an enone system at the C5 named FDDP A. The protein is Geranylgeranyl pyrophosphate synthase dpasD of Apiospora sacchari (Arthrinium sacchari).